Consider the following 1253-residue polypeptide: Elongator complex protein 1 (1253 aa).

A mediates dimerization region spans residues 830 to 1253; the sequence is VDVNMLFDHA…KPFEKLSILI (424 aa). The segment covering 1126-1141 has biased composition (polar residues); sequence YTKSSNSSKMTRNTSK. The tract at residues 1126-1153 is disordered; it reads YTKSSNSSKMTRNTSKNNRRLERKRARG. Residues 1137–1155 form a required for binding to tRNA region; the sequence is RNTSKNNRRLERKRARGKK. Residues 1142–1153 are compositionally biased toward basic residues; it reads NNRRLERKRARG.

It belongs to the ELP1/IKA1 family. Homodimer. Component of the elongator complex.

It is found in the cytoplasm. It participates in tRNA modification; 5-methoxycarbonylmethyl-2-thiouridine-tRNA biosynthesis. Component of the elongator complex, a multiprotein complex which is required for multiple tRNA modifications, including mcm5U (5-methoxycarbonylmethyl uridine), mcm5s2U (5-methoxycarbonylmethyl-2-thiouridine), and ncm5U (5-carbamoylmethyl uridine). The elongator complex catalyzes formation of carboxymethyluridine in the wobble base at position 34 in tRNAs. ELP1 binds to tRNA, mediating interaction of the elongator complex with tRNA. The polypeptide is Elongator complex protein 1 (Schizosaccharomyces pombe (strain 972 / ATCC 24843) (Fission yeast)).